Consider the following 469-residue polypeptide: 3-isopropylmalate dehydratase large subunit (469 aa).

Positions 349, 410, and 413 each coordinate [4Fe-4S] cluster.

Belongs to the aconitase/IPM isomerase family. LeuC type 1 subfamily. Heterodimer of LeuC and LeuD. Requires [4Fe-4S] cluster as cofactor.

It carries out the reaction (2R,3S)-3-isopropylmalate = (2S)-2-isopropylmalate. Its pathway is amino-acid biosynthesis; L-leucine biosynthesis; L-leucine from 3-methyl-2-oxobutanoate: step 2/4. Catalyzes the isomerization between 2-isopropylmalate and 3-isopropylmalate, via the formation of 2-isopropylmaleate. This Neisseria gonorrhoeae (strain ATCC 700825 / FA 1090) protein is 3-isopropylmalate dehydratase large subunit.